Consider the following 116-residue polypeptide: Proline-rich protein 9 (116 aa).

The sequence is that of Proline-rich protein 9 (Prr9) from Mus musculus (Mouse).